The primary structure comprises 95 residues: Aspartyl/glutamyl-tRNA(Asn/Gln) amidotransferase subunit C (95 aa).

It belongs to the GatC family. Heterotrimer of A, B and C subunits.

The enzyme catalyses L-glutamyl-tRNA(Gln) + L-glutamine + ATP + H2O = L-glutaminyl-tRNA(Gln) + L-glutamate + ADP + phosphate + H(+). It carries out the reaction L-aspartyl-tRNA(Asn) + L-glutamine + ATP + H2O = L-asparaginyl-tRNA(Asn) + L-glutamate + ADP + phosphate + 2 H(+). Allows the formation of correctly charged Asn-tRNA(Asn) or Gln-tRNA(Gln) through the transamidation of misacylated Asp-tRNA(Asn) or Glu-tRNA(Gln) in organisms which lack either or both of asparaginyl-tRNA or glutaminyl-tRNA synthetases. The reaction takes place in the presence of glutamine and ATP through an activated phospho-Asp-tRNA(Asn) or phospho-Glu-tRNA(Gln). This Caldanaerobacter subterraneus subsp. tengcongensis (strain DSM 15242 / JCM 11007 / NBRC 100824 / MB4) (Thermoanaerobacter tengcongensis) protein is Aspartyl/glutamyl-tRNA(Asn/Gln) amidotransferase subunit C.